A 242-amino-acid polypeptide reads, in one-letter code: Phosphatidylcholine synthase (242 aa).

The Cytoplasmic segment spans residues 1 to 15 (MKIFNYKRVPYAEMR). Residues 16–36 (AFSVHILTASGSFLAFLGVVA) form a helical membrane-spanning segment. Topologically, residues 37–41 (AAEHR) are periplasmic. A helical membrane pass occupies residues 42 to 62 (FIDMFWWLGLALLVDGIDGPI). Residues 63 to 76 (ARKVRVKEVLPNWS) lie on the Cytoplasmic side of the membrane. A helical transmembrane segment spans residues 77-97 (GDTLDNIIDYVTYVLLPAFAL). Topologically, residues 98–100 (YQS) are periplasmic. The chain crosses the membrane as a helical span at residues 101–121 (GMIGEPWSFVAAGMIVVSSAI). The Cytoplasmic portion of the chain corresponds to 122 to 133 (YYADMGMKTDEY). A helical membrane pass occupies residues 134-154 (FFSGFPVVWNMIVFTLFVIDA). Residues 155-159 (SATTA) are Periplasmic-facing. The chain crosses the membrane as a helical span at residues 160–180 (LTVVIVSVVLTFLPINFLHPV). Residues 181–187 (RVKRLRP) lie on the Cytoplasmic side of the membrane. Residues 188 to 208 (LNLGVFFLWSALGIFSLLMHF) form a helical membrane-spanning segment. Topologically, residues 209-214 (DTPEWA) are periplasmic. The helical transmembrane segment at 215–235 (LILFIVTGAYLYVIGAVLQFF) threads the bilayer. The Cytoplasmic segment spans residues 236 to 242 (PALGRET).

Belongs to the CDP-alcohol phosphatidyltransferase class-I family. Requires Mn(2+) as cofactor.

It is found in the cell inner membrane. The enzyme catalyses a CDP-1,2-diacyl-sn-glycerol + choline = a 1,2-diacyl-sn-glycero-3-phosphocholine + CMP + H(+). Functionally, condenses choline with CDP-diglyceride to produce phosphatidylcholine and CMP. The sequence is that of Phosphatidylcholine synthase from Rhizobium johnstonii (strain DSM 114642 / LMG 32736 / 3841) (Rhizobium leguminosarum bv. viciae).